Reading from the N-terminus, the 383-residue chain is Alanine racemase (383 aa).

Lysine 50 acts as the Proton acceptor; specific for D-alanine in catalysis. Residue lysine 50 is modified to N6-(pyridoxal phosphate)lysine. Arginine 151 is a binding site for substrate. Catalysis depends on tyrosine 279, which acts as the Proton acceptor; specific for L-alanine. Methionine 327 serves as a coordination point for substrate.

Belongs to the alanine racemase family. Pyridoxal 5'-phosphate serves as cofactor.

The enzyme catalyses L-alanine = D-alanine. Its pathway is amino-acid biosynthesis; D-alanine biosynthesis; D-alanine from L-alanine: step 1/1. Functionally, catalyzes the interconversion of L-alanine and D-alanine. May also act on other amino acids. The protein is Alanine racemase (alr) of Chlorobaculum tepidum (strain ATCC 49652 / DSM 12025 / NBRC 103806 / TLS) (Chlorobium tepidum).